A 674-amino-acid chain; its full sequence is DNA ligase (674 aa).

Residues 35–39 (DAEYD), 82–83 (SL), and Glu116 contribute to the NAD(+) site. Lys118 acts as the N6-AMP-lysine intermediate in catalysis. NAD(+) contacts are provided by Arg139, Glu174, Lys282, and Lys306. Positions 400, 403, 418, and 424 each coordinate Zn(2+). A BRCT domain is found at 593–674 (SYVSLIHGKT…WLQYIQPNKV (82 aa)).

This sequence belongs to the NAD-dependent DNA ligase family. LigA subfamily. Mg(2+) is required as a cofactor. Mn(2+) serves as cofactor.

It catalyses the reaction NAD(+) + (deoxyribonucleotide)n-3'-hydroxyl + 5'-phospho-(deoxyribonucleotide)m = (deoxyribonucleotide)n+m + AMP + beta-nicotinamide D-nucleotide.. DNA ligase that catalyzes the formation of phosphodiester linkages between 5'-phosphoryl and 3'-hydroxyl groups in double-stranded DNA using NAD as a coenzyme and as the energy source for the reaction. It is essential for DNA replication and repair of damaged DNA. This Ehrlichia ruminantium (strain Welgevonden) protein is DNA ligase.